The primary structure comprises 408 residues: Histidine--tRNA ligase (408 aa).

Belongs to the class-II aminoacyl-tRNA synthetase family. As to quaternary structure, homodimer.

It is found in the cytoplasm. It carries out the reaction tRNA(His) + L-histidine + ATP = L-histidyl-tRNA(His) + AMP + diphosphate + H(+). In Campylobacter lari (strain RM2100 / D67 / ATCC BAA-1060), this protein is Histidine--tRNA ligase.